The primary structure comprises 486 residues: Aspartyl/glutamyl-tRNA(Asn/Gln) amidotransferase subunit B (486 aa).

The protein belongs to the GatB/GatE family. GatB subfamily. In terms of assembly, heterotrimer of A, B and C subunits.

The enzyme catalyses L-glutamyl-tRNA(Gln) + L-glutamine + ATP + H2O = L-glutaminyl-tRNA(Gln) + L-glutamate + ADP + phosphate + H(+). The catalysed reaction is L-aspartyl-tRNA(Asn) + L-glutamine + ATP + H2O = L-asparaginyl-tRNA(Asn) + L-glutamate + ADP + phosphate + 2 H(+). Its function is as follows. Allows the formation of correctly charged Asn-tRNA(Asn) or Gln-tRNA(Gln) through the transamidation of misacylated Asp-tRNA(Asn) or Glu-tRNA(Gln) in organisms which lack either or both of asparaginyl-tRNA or glutaminyl-tRNA synthetases. The reaction takes place in the presence of glutamine and ATP through an activated phospho-Asp-tRNA(Asn) or phospho-Glu-tRNA(Gln). This is Aspartyl/glutamyl-tRNA(Asn/Gln) amidotransferase subunit B from Janthinobacterium sp. (strain Marseille) (Minibacterium massiliensis).